The following is a 495-amino-acid chain: MSNSPTVATLSQEYFDPNIPQILPHEKMYKIQVGKSLFKISGASLSSDGPSFFTEYFSKKRSPSNNDDSNNDTMESNKNEVLFIDRSAEVFEWIYQHLQGYIIEIKDEVQYTMLFADAMYYNLPRLRSLLKETDYYFTNIGGQSFKIAKNLFRREGDSPNYFEIYAATVYIDVEELIISKKLLRPPSHSAPYIPRSSEYFKDLLTLLGGASIDLDDNKRNALIKECRYYRLLNLEQRLIKSHISYNPITRKEEICLLLKDLSKKGITFPASSAFSTSPYFEDDFCSINECDSLSKTREQPANKKIKLDMTEKYNDSWNMLCYKRPFLDKHPRELIFQINSTDCTIILNKESQSIHVDITGESAYKFEALFGSHLPNTPSGAPKLKNYQYRFPSDSTQTKIETHYLLPACIYLCDLDINGIKISQVQTLLTDKNKFNDRVIDVSDPLDLRFCSGLKLYLRKSLWKLAVKDGNIMLIAIKAIAFNGTKEYYKGYEYL.

The protein resides in the cytoplasm. Its subcellular location is the nucleus. This is an uncharacterized protein from Saccharomyces cerevisiae (strain ATCC 204508 / S288c) (Baker's yeast).